Reading from the N-terminus, the 20-residue chain is Alkaline phosphatase (20 aa).

Expressed by the venom gland.

It localises to the secreted. It carries out the reaction a phosphate monoester + H2O = an alcohol + phosphate. In terms of biological role, has hemorrhagic activity. This is Alkaline phosphatase from Deinagkistrodon acutus (Hundred-pace snake).